The primary structure comprises 263 residues: Small ribosomal subunit protein uS2 (263 aa).

It belongs to the universal ribosomal protein uS2 family.

This Roseiflexus castenholzii (strain DSM 13941 / HLO8) protein is Small ribosomal subunit protein uS2.